The primary structure comprises 232 residues: Orotate phosphoribosyltransferase (232 aa).

Residues arginine 107, lysine 108, lysine 111, histidine 113, and 133 to 141 (EDLTTAGGS) each bind 5-phospho-alpha-D-ribose 1-diphosphate. Position 137 (threonine 137) interacts with orotate.

The protein belongs to the purine/pyrimidine phosphoribosyltransferase family. PyrE subfamily. Homodimer. Mg(2+) is required as a cofactor.

The catalysed reaction is orotidine 5'-phosphate + diphosphate = orotate + 5-phospho-alpha-D-ribose 1-diphosphate. The protein operates within pyrimidine metabolism; UMP biosynthesis via de novo pathway; UMP from orotate: step 1/2. Catalyzes the transfer of a ribosyl phosphate group from 5-phosphoribose 1-diphosphate to orotate, leading to the formation of orotidine monophosphate (OMP). The sequence is that of Orotate phosphoribosyltransferase from Sinorhizobium medicae (strain WSM419) (Ensifer medicae).